Here is a 321-residue protein sequence, read N- to C-terminus: Olfactory receptor 51V1 (321 aa).

Over 1 to 34 (MFLSSRMITSVSPSTSTNSSFLLTGFSGMEQQYP) the chain is Extracellular. The N-linked (GlcNAc...) asparagine glycan is linked to Asn-18. A helical membrane pass occupies residues 35 to 55 (WLSIPFSSIYAMVLLGNCMVL). Topologically, residues 56 to 63 (HVIWTEPS) are cytoplasmic. Residues 64–84 (LHQPMFYFLSMLALTDLCMGL) form a helical membrane-spanning segment. The Extracellular segment spans residues 85 to 108 (STVYTVLGILWGIIREISLDSCIA). A disulfide bridge links Cys-106 with Cys-188. The chain crosses the membrane as a helical span at residues 109-129 (QSYFIHGLSFMESSVLLTMAF). Topologically, residues 130–148 (DRYIAICNPLRYSSILTNS) are cytoplasmic. Residues 149 to 169 (RIIKIGLTIIGRSFFFITPPI) traverse the membrane as a helical segment. Residues 170 to 205 (ICLKFFNYCHFHILSHSFCLHQDLLRLACSDIRFNS) lie on the Extracellular side of the membrane. Residues 206–226 (YYALMLVICILLLDAILILFS) traverse the membrane as a helical segment. The Cytoplasmic segment spans residues 227–246 (YILILKSVLAVASQEERHKL). Residues 247 to 267 (FQTCISHICAVLVFYIPIISL) traverse the membrane as a helical segment. Residues 268–282 (TMVHRFGKHLSPVAH) lie on the Extracellular side of the membrane. The helical transmembrane segment at 283 to 303 (VLIGNIYILFPPLMNPIIYSV) threads the bilayer. Residues 304–321 (KTQQIHTRMLRLFSLKRY) lie on the Cytoplasmic side of the membrane.

It belongs to the G-protein coupled receptor 1 family.

The protein localises to the cell membrane. In terms of biological role, odorant receptor. This is Olfactory receptor 51V1 (OR51V1) from Homo sapiens (Human).